Here is a 94-residue protein sequence, read N- to C-terminus: Small ribosomal subunit protein uS19 (94 aa).

It belongs to the universal ribosomal protein uS19 family.

Its function is as follows. Protein S19 forms a complex with S13 that binds strongly to the 16S ribosomal RNA. The sequence is that of Small ribosomal subunit protein uS19 from Halothermothrix orenii (strain H 168 / OCM 544 / DSM 9562).